Consider the following 100-residue polypeptide: Putative septation protein SpoVG (100 aa).

The protein belongs to the SpoVG family.

Functionally, could be involved in septation. The chain is Putative septation protein SpoVG from Staphylococcus aureus (strain JH1).